We begin with the raw amino-acid sequence, 157 residues long: Mediator of RNA polymerase II transcription subunit 22 (157 aa).

This sequence belongs to the Mediator complex subunit 22 family. In terms of assembly, component of the Mediator complex.

The protein localises to the nucleus. In terms of biological role, component of the Mediator complex, a coactivator involved in the regulated transcription of nearly all RNA polymerase II-dependent genes. Mediator functions as a bridge to convey information from gene-specific regulatory proteins to the basal RNA polymerase II transcription machinery. Mediator is recruited to promoters by direct interactions with regulatory proteins and serves as a scaffold for the assembly of a functional preinitiation complex with RNA polymerase II and the general transcription factors. This is Mediator of RNA polymerase II transcription subunit 22 (mdt-22) from Caenorhabditis elegans.